The primary structure comprises 423 residues: Autophagy-related protein 18 (423 aa).

4 WD repeats span residues 1–34, 183–223, 228–267, and 367–407; these read MNYVTFNQDYTCLAVGTAKGFRIYHTDPFSKIFT, AHRA…KLYQ, TYPSTIFSLSFNMSSTLLCVSSNSDTIHIFRLGGPVTGMP, and SRSG…GGEG. A L/FRRG motif motif is present at residues 224-228; that stretch reads FRRGT. The tract at residues 260 to 320 is disordered; that stretch reads GGPVTGMPES…KSTGTFGSMI (61 aa).

Belongs to the WD repeat PROPPIN family. As to quaternary structure, component of the PI(3,5)P2 regulatory complex.

The protein resides in the preautophagosomal structure membrane. Its subcellular location is the vacuole membrane. The protein localises to the endosome membrane. The PI(3,5)P2 regulatory complex regulates both the synthesis and turnover of phosphatidylinositol 3,5-bisphosphate (PtdIns(3,5)P2). Necessary for proper vacuole morphology. Plays an important role in osmotically-induced vacuole fragmentation. Required for cytoplasm to vacuole transport (Cvt) vesicle formation, pexophagy and starvation-induced autophagy. Involved in correct atg9 trafficking to the pre-autophagosomal structure. Might also be involved in premeiotic DNA replication. The sequence is that of Autophagy-related protein 18 (atg18) from Sclerotinia sclerotiorum (strain ATCC 18683 / 1980 / Ss-1) (White mold).